A 346-amino-acid chain; its full sequence is D-alanine--D-alanine ligase A (346 aa).

Residues 138-332 (KRLFLAAGVE…FAELCERICR (195 aa)) form the ATP-grasp domain. Position 164 to 217 (164 to 217 (QLGFPLVVKPNSQGSTVGLSIVHSQAELQPAIELAGRYGDEVMLERFVAGREVT)) interacts with ATP. Positions 286, 299, and 301 each coordinate Mg(2+).

It belongs to the D-alanine--D-alanine ligase family. Requires Mg(2+) as cofactor. Mn(2+) is required as a cofactor.

Its subcellular location is the cytoplasm. It catalyses the reaction 2 D-alanine + ATP = D-alanyl-D-alanine + ADP + phosphate + H(+). It participates in cell wall biogenesis; peptidoglycan biosynthesis. Its function is as follows. Cell wall formation. The sequence is that of D-alanine--D-alanine ligase A from Pseudomonas aeruginosa (strain ATCC 15692 / DSM 22644 / CIP 104116 / JCM 14847 / LMG 12228 / 1C / PRS 101 / PAO1).